The following is a 415-amino-acid chain: MGRRPQLRLVKALLLLGLNSISASLQDQHCESLSLASNVSGLQCNASVDLNGTCWPQSPAGQLVVRPCLVFFYGVRYNTTSNGYRVCLANGTWAARVNHSECQEILSEGEKSKAHYHIAVIINYLGHCISLAALLVAFVLFLRLRSIRCVRNIIHWNLISAFILRNATWFVVQLTMSPEVHQSNVGWCRLVTAAYNYFHVTNFFWMFGEGCYLHTAVVLTYSTDRLRKWMFICIGWGVPFPIIVAWAIGKLYYDNEKCWFGKRPGVYTDYIYQGPMILVLLINFIFLFNIVRILMTKLRASTTSETIQYRKAVKATLVLLPLLGITYMLFFVNPGEDEVSRVVFIYFNSFLESFQGFFVSVFYCFLNSEVRSAIRKRWHRWQDKHSIRARVARAMSIPTSPTRVSFHSIKQSTAV.

Residues 1 to 23 (MGRRPQLRLVKALLLLGLNSISA) form the signal peptide. The Extracellular segment spans residues 24–111 (SLQDQHCESL…CQEILSEGEK (88 aa)). Intrachain disulfides connect C30–C54, C44–C87, and C68–C102. N38, N45, N51, N78, N90, and N98 each carry an N-linked (GlcNAc...) asparagine glycan. Positions 99–108 (HSECQEILSE) are important for peptide agonist binding. A helical membrane pass occupies residues 112–142 (SKAHYHIAVIINYLGHCISLAALLVAFVLFL). The Cytoplasmic portion of the chain corresponds to 143–149 (RLRSIRC). Residues 150–174 (VRNIIHWNLISAFILRNATWFVVQL) form a helical membrane-spanning segment. The Extracellular portion of the chain corresponds to 175–189 (TMSPEVHQSNVGWCR). The cysteines at positions 188 and 258 are disulfide-linked. The chain crosses the membrane as a helical span at residues 190–218 (LVTAAYNYFHVTNFFWMFGEGCYLHTAVV). The Cytoplasmic segment spans residues 219 to 225 (LTYSTDR). The chain crosses the membrane as a helical span at residues 226–253 (LRKWMFICIGWGVPFPIIVAWAIGKLYY). The Extracellular segment spans residues 254 to 269 (DNEKCWFGKRPGVYTD). The helical transmembrane segment at 270-295 (YIYQGPMILVLLINFIFLFNIVRILM) threads the bilayer. The tract at residues 280–290 (LLINFIFLFNI) is important for antagonist binding. Over 296–306 (TKLRASTTSET) the chain is Cytoplasmic. Residue S301 is modified to Phosphoserine; by PKA. The chain crosses the membrane as a helical span at residues 307-331 (IQYRKAVKATLVLLPLLGITYMLFF). The Extracellular segment spans residues 332-338 (VNPGEDE). A helical membrane pass occupies residues 339-368 (VSRVVFIYFNSFLESFQGFFVSVFYCFLNS). The Cytoplasmic portion of the chain corresponds to 369–415 (EVRSAIRKRWHRWQDKHSIRARVARAMSIPTSPTRVSFHSIKQSTAV).

Belongs to the G-protein coupled receptor 2 family. As to quaternary structure, heterodimer; heterodimerizes with GPER1. Interacts (via N-terminal extracellular domain) with CRH and UCN. Interacts with DLG1; this inhibits endocytosis of CRHR1 after agonist binding. C-terminal Ser or Thr residues may be phosphorylated. In terms of processing, phosphorylation at Ser-301 by PKA prevents maximal coupling to Gq-protein, and thereby negatively regulates downstream signaling.

The protein localises to the cell membrane. It is found in the endosome. Its function is as follows. G-protein coupled receptor for CRH (corticotropin-releasing factor) and UCN (urocortin). Has high affinity for CRH and UCN. Ligand binding causes a conformation change that triggers signaling via guanine nucleotide-binding proteins (G proteins) and down-stream effectors, such as adenylate cyclase. Promotes the activation of adenylate cyclase, leading to increased intracellular cAMP levels. Inhibits the activity of the calcium channel CACNA1H. Required for normal embryonic development of the adrenal gland and for normal hormonal responses to stress. Plays a role in the response to anxiogenic stimuli. The polypeptide is Corticotropin-releasing factor receptor 1 (CRHR1) (Ovis aries (Sheep)).